Consider the following 492-residue polypeptide: Glutamyl-tRNA(Gln) amidotransferase subunit B, mitochondrial (492 aa).

Belongs to the GatB/GatE family. GatB subfamily. Subunit of the heterotrimeric GatFAB amidotransferase (AdT) complex, composed of A, B and F subunits.

It localises to the mitochondrion. The enzyme catalyses L-glutamyl-tRNA(Gln) + L-glutamine + ATP + H2O = L-glutaminyl-tRNA(Gln) + L-glutamate + ADP + phosphate + H(+). Functionally, allows the formation of correctly charged Gln-tRNA(Gln) through the transamidation of misacylated Glu-tRNA(Gln) in the mitochondria. The reaction takes place in the presence of glutamine and ATP through an activated gamma-phospho-Glu-tRNA(Gln). The sequence is that of Glutamyl-tRNA(Gln) amidotransferase subunit B, mitochondrial from Komagataella phaffii (strain GS115 / ATCC 20864) (Yeast).